The primary structure comprises 468 residues: 6-phospho-beta-galactosidase (468 aa).

Residues glutamine 19, histidine 116, asparagine 159, glutamate 160, and asparagine 297 each contribute to the D-galactose 6-phosphate site. Glutamate 160 serves as the catalytic Proton donor. The Nucleophile role is filled by glutamate 375. Residues serine 428, tryptophan 429, lysine 435, and tyrosine 437 each contribute to the D-galactose 6-phosphate site.

Belongs to the glycosyl hydrolase 1 family.

The enzyme catalyses a 6-phospho-beta-D-galactoside + H2O = D-galactose 6-phosphate + an alcohol. It participates in carbohydrate metabolism; lactose degradation; D-galactose 6-phosphate and beta-D-glucose from lactose 6-phosphate: step 1/1. The chain is 6-phospho-beta-galactosidase from Streptococcus agalactiae serotype III (strain NEM316).